Consider the following 352-residue polypeptide: MRPLNVQIRLGNLRHNYQILKEMHGGKLLAVVKADAYGHGAVRCAFALADLADGFAVATIDEGIRLRESGITHPIVLLEGVFEASEYEAVEQYSLWPAVGNQWQLEALLIRHWKKPVKVWLKMDSGMHRTGFFPHDYASAYAALKQSEYVDSIVKFSHFSCADEPESGMTEIQMEAFDLGTEGLEGEESLANSAAILNVPEARRDWGRAGLALYGISPFGGSDDRLKPVMRLSTRIFGERVLQPHSPIGYGATFYTSKSTRVGLIACGYADGYPRRAPSNSPVAVDGKLTRVIGRVSMDMMTIELDASQEGLGHEVELWGDTVNINTVAEAAGTIPYELMCNIKRAKFTYIE.

The active-site Proton acceptor; specific for D-alanine is Lys-33. Lys-33 is modified (N6-(pyridoxal phosphate)lysine). Substrate is bound at residue Arg-129. Tyr-250 functions as the Proton acceptor; specific for L-alanine in the catalytic mechanism. Met-298 lines the substrate pocket.

Belongs to the alanine racemase family. Requires pyridoxal 5'-phosphate as cofactor.

It carries out the reaction L-alanine = D-alanine. It participates in amino-acid biosynthesis; D-alanine biosynthesis; D-alanine from L-alanine: step 1/1. Its function is as follows. Catalyzes the interconversion of L-alanine and D-alanine. May also act on other amino acids. The sequence is that of Alanine racemase (alr) from Neisseria meningitidis serogroup C / serotype 2a (strain ATCC 700532 / DSM 15464 / FAM18).